We begin with the raw amino-acid sequence, 640 residues long: Phosphomethylpyrimidine synthase (640 aa).

Substrate-binding positions include N235, M264, Y293, H329, 349–351 (SRG), 390–393 (DGLR), and E429. H433 contributes to the Zn(2+) binding site. Residue Y456 coordinates substrate. H497 contributes to the Zn(2+) binding site. [4Fe-4S] cluster-binding residues include C577, C580, and C585.

The protein belongs to the ThiC family. Homodimer. [4Fe-4S] cluster is required as a cofactor.

It catalyses the reaction 5-amino-1-(5-phospho-beta-D-ribosyl)imidazole + S-adenosyl-L-methionine = 4-amino-2-methyl-5-(phosphooxymethyl)pyrimidine + CO + 5'-deoxyadenosine + formate + L-methionine + 3 H(+). It functions in the pathway cofactor biosynthesis; thiamine diphosphate biosynthesis. In terms of biological role, catalyzes the synthesis of the hydroxymethylpyrimidine phosphate (HMP-P) moiety of thiamine from aminoimidazole ribotide (AIR) in a radical S-adenosyl-L-methionine (SAM)-dependent reaction. The sequence is that of Phosphomethylpyrimidine synthase from Photobacterium profundum (strain SS9).